A 127-amino-acid polypeptide reads, in one-letter code: MSVEVDGFNASPLFKELHEGLADKSKAEEAVKAVNAVIVITLKNKEGKEQSWVLDLKKAGTLAKVDGAAPKGDVQLILKDVDFVKLANNKVNGQKLFMNGKLKVKGNMMKATAIESVFKKLDPRPKL.

The SCP2 domain occupies 14-119 (FKELHEGLAD…KATAIESVFK (106 aa)). The segment at 33–41 (AVNAVIVIT) is hydrophobic. Positions 43-52 (KNKEGKEQSW) are hydrophilic.

As to quaternary structure, monomer.

Its subcellular location is the peroxisome. It participates in lipid metabolism; fatty acid metabolism. Is involved in beta-oxidation of long-chain fatty acids. Its exact function is unknown, but possesses a nonspecific lipid-transfer activity, despite the absence of a cysteine residue thought to be essential for the activity of its mammalian counterparts. In Candida maltosa (Yeast), this protein is Oleate-induced peroxisomal protein POX18 (POX18).